A 376-amino-acid polypeptide reads, in one-letter code: Chaperone protein DnaJ (376 aa).

The J domain maps to 5–70 (DFYETLGVAK…QKRAAYDRYG (66 aa)). The CR-type zinc finger occupies 137–215 (GKTAQIRVPT…CHGQGRVTEE (79 aa)). Residues C150, C153, C167, C170, C189, C192, C203, and C206 each contribute to the Zn(2+) site. CXXCXGXG motif repeat units lie at residues 150–157 (CDVCSGSG), 167–174 (CGTCQGSG), 189–196 (CPTCHGRG), and 203–210 (CPKCHGQG).

This sequence belongs to the DnaJ family. Homodimer. Requires Zn(2+) as cofactor.

Its subcellular location is the cytoplasm. Functionally, participates actively in the response to hyperosmotic and heat shock by preventing the aggregation of stress-denatured proteins and by disaggregating proteins, also in an autonomous, DnaK-independent fashion. Unfolded proteins bind initially to DnaJ; upon interaction with the DnaJ-bound protein, DnaK hydrolyzes its bound ATP, resulting in the formation of a stable complex. GrpE releases ADP from DnaK; ATP binding to DnaK triggers the release of the substrate protein, thus completing the reaction cycle. Several rounds of ATP-dependent interactions between DnaJ, DnaK and GrpE are required for fully efficient folding. Also involved, together with DnaK and GrpE, in the DNA replication of plasmids through activation of initiation proteins. This chain is Chaperone protein DnaJ, found in Rhizobium leguminosarum bv. trifolii (strain WSM2304).